We begin with the raw amino-acid sequence, 710 residues long: Aminopeptidase P2 (710 aa).

The transit peptide at 1 to 79 (MIPLTLSSPS…IRKAQTKVVV (79 aa)) directs the protein to the chloroplast. A peptide-binding residues include R147 and H486. Positions 506, 517, and 580 each coordinate Mn(2+). The a peptide site is built by H580, H589, and E614. 2 residues coordinate Mn(2+): E614 and E628.

The protein belongs to the peptidase M24B family. In terms of assembly, homodimer. Mn(2+) serves as cofactor.

It localises to the plastid. The protein resides in the chloroplast. It catalyses the reaction Release of any N-terminal amino acid, including proline, that is linked to proline, even from a dipeptide or tripeptide.. Its function is as follows. Catalyzes the removal of a penultimate prolyl residue from the N-termini of peptides, such as Arg-Pro-Pro. This Arabidopsis thaliana (Mouse-ear cress) protein is Aminopeptidase P2.